We begin with the raw amino-acid sequence, 227 residues long: ATP phosphoribosyltransferase (227 aa).

Belongs to the ATP phosphoribosyltransferase family. Short subfamily. Heteromultimer composed of HisG and HisZ subunits.

The protein resides in the cytoplasm. The catalysed reaction is 1-(5-phospho-beta-D-ribosyl)-ATP + diphosphate = 5-phospho-alpha-D-ribose 1-diphosphate + ATP. It participates in amino-acid biosynthesis; L-histidine biosynthesis; L-histidine from 5-phospho-alpha-D-ribose 1-diphosphate: step 1/9. In terms of biological role, catalyzes the condensation of ATP and 5-phosphoribose 1-diphosphate to form N'-(5'-phosphoribosyl)-ATP (PR-ATP). Has a crucial role in the pathway because the rate of histidine biosynthesis seems to be controlled primarily by regulation of HisG enzymatic activity. This is ATP phosphoribosyltransferase from Bordetella avium (strain 197N).